A 325-amino-acid chain; its full sequence is Outer spore wall protein LDS1 (325 aa).

The Cytoplasmic portion of the chain corresponds to 1–91; sequence MSFTGSLALA…NTNKSSYSTT (91 aa). The chain crosses the membrane as a helical span at residues 92–112; it reads MLGILSSYLIMFALVSFVYWA. The Extracellular portion of the chain corresponds to 113-118; sequence TITPMY. Residues 119-139 form a helical membrane-spanning segment; it reads TAFLIVLGPIGLFIAIFHSFL. At 140-208 the chain is on the cytoplasmic side; it reads QANVFTLLFM…VKYMLGLSVL (69 aa). Residues 209-229 traverse the membrane as a helical segment; it reads FVLLVISFFPLIGPILFHILI. Residues 230 to 263 lie on the Extracellular side of the membrane; sequence SPFITQIYFTKVLRLQNFDNIQRRENIYLHAGQY. Residues 264-284 traverse the membrane as a helical segment; that stretch reads ASFGFLAGLIESVPILAGFAI. The Cytoplasmic segment spans residues 285-325; the sequence is STNTIGSVLFNLDHPMVPENLVETQAEIEAAPQDINQQPNQ.

Belongs to the LDS family.

It localises to the prospore membrane. The protein localises to the lipid droplet. The protein resides in the spore wall. In terms of biological role, involved in spore wall assembly. The chain is Outer spore wall protein LDS1 from Saccharomyces cerevisiae (strain ATCC 204508 / S288c) (Baker's yeast).